The following is a 242-amino-acid chain: MKVKTRSKKVNKAWLDQHVNDPYVQRARKEGYRARAAYKLREIDEQLGLIRPGYTVVDLGATPGAWSQYLRRRMAAEGAIIALDILPMEPLEGVTCLHGDFRAPDVQQRLEQALAGRVVDVVVSDMAPNLSGIACADAARMADLVELAVAFSCRHLKPDGALLVKLFHGSGYSDLAALFKQTFLRVVPLKPKASRDKSSETFLLGRGLKKASPNGLDSRSGTAAEPAPLVPIGTNSMPANGD.

Positions 64, 66, 84, 100, and 125 each coordinate S-adenosyl-L-methionine. Lys165 serves as the catalytic Proton acceptor. A disordered region spans residues 198–242; the sequence is SSETFLLGRGLKKASPNGLDSRSGTAAEPAPLVPIGTNSMPANGD. The segment covering 233–242 has biased composition (polar residues); the sequence is GTNSMPANGD.

The protein belongs to the class I-like SAM-binding methyltransferase superfamily. RNA methyltransferase RlmE family.

It localises to the cytoplasm. It carries out the reaction uridine(2552) in 23S rRNA + S-adenosyl-L-methionine = 2'-O-methyluridine(2552) in 23S rRNA + S-adenosyl-L-homocysteine + H(+). Functionally, specifically methylates the uridine in position 2552 of 23S rRNA at the 2'-O position of the ribose in the fully assembled 50S ribosomal subunit. In Verminephrobacter eiseniae (strain EF01-2), this protein is Ribosomal RNA large subunit methyltransferase E.